The primary structure comprises 475 residues: Protein arginine N-methyltransferase 2 (475 aa).

Positions 167 to 194 (EFLSDDDDEEMDVDDDEEDESRDGEETG) are disordered. The span at 169-194 (LSDDDDEEMDVDDDEEDESRDGEETG) shows a compositional bias: acidic residues. The region spanning 247–475 (LAGSQMDYLK…EDFYLPVCTF (229 aa)) is the RMT2 domain. S-adenosyl-L-methionine is bound by residues Tyr254, Met285, 310–315 (FGLGII), 331–333 (EAH), 358–359 (WQ), and Asp378.

It belongs to the class I-like SAM-binding methyltransferase superfamily. RMT2 methyltransferase family. Monomer.

Its subcellular location is the cytoplasm. It is found in the nucleus. S-adenosyl-L-methionine-dependent protein-arginine N-methyltransferase that methylates the delta-nitrogen atom of arginine residues to form N5-methylarginine (type IV) in target proteins. Monomethylates ribosomal protein L12. This Yarrowia lipolytica (strain CLIB 122 / E 150) (Yeast) protein is Protein arginine N-methyltransferase 2.